The sequence spans 289 residues: MQNRTLPYFLILPSLLLAAVVIFWPVVHLFEIATHDVNRFGQLREFNDGANFTALFATAEFMNALWRTAVWTVAVVGGALVLSIPVAIILNMDFYGRSVARVIIMLPWAVSLTMTAIFWRWALNGESGMLNSALHGLGLIDTNIQWLASAATAFPMQILVGILVTVPFTTTIFLGGLSSIPDDLYEASSLEGASLWQQFREITFPLLKPFVNIAIVLNTIYVFNSFPIIWVMTQGRPANSTDILVTHLYKLAFRLGKFGEASAVSLIMLAILLVFTVIYIRISTRSEQS.

6 consecutive transmembrane segments (helical) span residues 9–29 (FLIL…VVHL), 70–90 (VWTV…AIIL), 99–119 (VARV…AIFW), 144–166 (IQWL…LVTV), 213–233 (IAIV…WVMT), and 258–278 (FGEA…FTVI). The ABC transmembrane type-1 domain maps to 65–279 (LWRTAVWTVA…AILLVFTVIY (215 aa)).

This sequence belongs to the binding-protein-dependent transport system permease family. The complex is composed of two ATP-binding proteins (BruAb2_0487), two transmembrane proteins (BruAb2_0483) and a solute-binding protein (BruAb2_0484).

Its subcellular location is the cell inner membrane. In terms of biological role, probably part of an ABC transporter complex. Probably responsible for the translocation of the substrate across the membrane. The chain is Probable ABC transporter permease protein BruAb2_0483 from Brucella abortus biovar 1 (strain 9-941).